An 89-amino-acid polypeptide reads, in one-letter code: UPF0145 protein MJ1170 (89 aa).

Belongs to the UPF0145 family. Highly divergent.

The protein is UPF0145 protein MJ1170 of Methanocaldococcus jannaschii (strain ATCC 43067 / DSM 2661 / JAL-1 / JCM 10045 / NBRC 100440) (Methanococcus jannaschii).